The primary structure comprises 82 residues: Small ribosomal subunit protein bS20 (82 aa).

The segment covering 1-11 (MANHKSALKRI) has biased composition (basic residues). The disordered stretch occupies residues 1–20 (MANHKSALKRIRSNETKRLR).

It belongs to the bacterial ribosomal protein bS20 family.

In terms of biological role, binds directly to 16S ribosomal RNA. This chain is Small ribosomal subunit protein bS20, found in Christiangramia forsetii (strain DSM 17595 / CGMCC 1.15422 / KT0803) (Gramella forsetii).